Reading from the N-terminus, the 729-residue chain is Solute carrier family 15 member 2 (729 aa).

The segment at 1–34 is disordered; the sequence is MNPFQKNESKETLFSPVSIEEVPPRPPSPPKKPS. Over 1 to 57 the chain is Cytoplasmic; that stretch reads MNPFQKNESKETLFSPVSIEEVPPRPPSPPKKPSPTICGSNYPLSIAFIVVNEFCER. A Phosphoserine modification is found at Ser9. A Phosphothreonine modification is found at Thr12. Over residues 24-33 the composition is skewed to pro residues; that stretch reads PRPPSPPKKP. Position 28 is a phosphoserine (Ser28). The helical transmembrane segment at 58-78 threads the bilayer; sequence FSYYGMKAVLILYFLYFLHWN. Residues 79 to 83 are Extracellular-facing; it reads EDTST. Residues 84 to 104 form a helical membrane-spanning segment; the sequence is SIYHAFSSLCYFTPILGAAIA. Residues 105-113 lie on the Cytoplasmic side of the membrane; that stretch reads DSWLGKFKT. Residues 114-134 form a helical membrane-spanning segment; that stretch reads IIYLSLVYVLGHVIKSLGALP. Residues 135-139 lie on the Extracellular side of the membrane; the sequence is ILGGQ. The helical transmembrane segment at 140-160 threads the bilayer; the sequence is VVHTVLSLIGLSLIALGTGGI. Over 161 to 183 the chain is Cytoplasmic; sequence KPCVAAFGGDQFEEKHAEERTRY. A helical membrane pass occupies residues 184–204; sequence FSVFYLSINAGSLISTFITPM. Residues 205–217 lie on the Extracellular side of the membrane; it reads LRGDVQCFGEDCY. Residues 218–238 form a helical membrane-spanning segment; the sequence is ALAFGVPGLLMVIALVVFAMG. At 239–295 the chain is on the cytoplasmic side; it reads SKIYNKPPPEGNIVAQVFKCIWFAISNRFKNRSGDIPKRQHWLDWAAEKYPKQLIMD. A helical transmembrane segment spans residues 296–316; sequence VKALTRVLFLYIPLPMFWALL. The Extracellular segment spans residues 317–343; the sequence is DQQGSRWTLQAIRMNRNLGFFVLQPDQ. Residues 344–364 form a helical membrane-spanning segment; that stretch reads MQVLNPLLVLIFIPLFDFVIY. Residues 365-380 are Cytoplasmic-facing; that stretch reads RLVSKCGINFSSLRKM. Residues 381-401 form a helical membrane-spanning segment; sequence AVGMILACLAFAVAAAVEIKI. Residues 402–611 lie on the Extracellular side of the membrane; it reads NEMAPAQPGP…PANKMSIAWQ (210 aa). The tract at residues 402–611 is extracellular domain (ECD); it reads NEMAPAQPGP…PANKMSIAWQ (210 aa). N-linked (GlcNAc...) asparagine glycans are attached at residues Asn435, Asn472, Asn528, Asn567, and Asn587. A helical membrane pass occupies residues 612–632; the sequence is LPQYALVTAGEVMFSVTGLEF. Residues 633-643 lie on the Cytoplasmic side of the membrane; it reads SYSQAPSSMKS. A helical transmembrane segment spans residues 644–664; the sequence is VLQAAWLLTIAVGNIIVLVVA. At 665–674 the chain is on the extracellular side; that stretch reads QFSGLVQWAE. Residues 675–695 traverse the membrane as a helical segment; sequence FILFSCLLLVICLIFSIMGYY. Over 696 to 729 the chain is Cytoplasmic; the sequence is YVPVKTEDMRGPADKHIPHIQGNMIKLETKKTKL.

This sequence belongs to the major facilitator superfamily. Proton-dependent oligopeptide transporter (POT/PTR) (TC 2.A.17) family. As to quaternary structure, interacts (via extracellular domain region) with trypsin. Expressed in kidney. Not detected in intestine. Highly expressed in macrophages.

The protein resides in the apical cell membrane. The protein localises to the cytoplasmic vesicle. Its subcellular location is the phagosome membrane. It localises to the cell membrane. It catalyses the reaction a dipeptide(out) + 2 H(+)(out) = a dipeptide(in) + 2 H(+)(in). The catalysed reaction is N-acetyl-D-muramoyl-L-alanyl-D-isoglutamine(out) + 3 H(+)(out) = N-acetyl-D-muramoyl-L-alanyl-D-isoglutamine(in) + 3 H(+)(in). It carries out the reaction glycyl-L-leucine(out) + 2 H(+)(out) = glycyl-L-leucine(in) + 2 H(+)(in). The enzyme catalyses glycyl-L-lysine(out) + 2 H(+)(out) = glycyl-L-lysine(in) + 2 H(+)(in). It catalyses the reaction glycyl-L-glutamate(out) + 3 H(+)(out) = glycyl-L-glutamate(in) + 3 H(+)(in). The catalysed reaction is L-alanyl-L-alanine(out) + 2 H(+)(out) = L-alanyl-L-alanine(in) + 2 H(+)(in). It carries out the reaction an L-amino acid tripeptide(out) + 2 H(+)(out) = an L-amino acid tripeptide(in) + 2 H(+)(in). The enzyme catalyses carnosine(out) + 2 H(+)(out) = carnosine(in) + 2 H(+)(in). Its function is as follows. Proton-coupled amino-acid transporter that transports oligopeptides of 2 to 4 amino acids with a preference for dipeptides. Transports neutral and anionic dipeptides with a proton to peptide stoichiometry of 2:1 or 3:1. In kidney, involved in the absorption of circulating di- and tripeptides from the glomerular filtrate. Can also transport beta-lactam antibiotics, such as the aminocephalosporin cefadroxil, and other antiviral and anticancer drugs. Transports the dipeptide-like aminopeptidase inhibitor bestatin. Also able to transport carnosine. Involved in innate immunity by promoting the detection of microbial pathogens by NOD-like receptors (NLRs). Mediates transport of bacterial peptidoglycans across the plasma membrane or, in macrophages, the phagosome membrane: catalyzes the transport of certain bacterial peptidoglycans, such as muramyl dipeptide (MDP), the NOD2 ligand. This is Solute carrier family 15 member 2 from Homo sapiens (Human).